Consider the following 384-residue polypeptide: MVRRLLISLIRAEARRGRNQILPEAAFTGDPRIDEEGLGFDSLARLDLIGAVRDFFDLSRTGIEDYVYVEPTLQGWIDRIMQHFDLLAARSETAQAVFRTSGSTGTPKPIPHPWPKLMREAASMARDQGLVPAPGGAVIGLVPAHHLFGCLFTALLPELAGAALRDLTAAPPASALRTAQPGDLIIATPHLWAHLGAAGAFPPGLRGVSSGAPMPDALWHSLLAAGLEDLTEVYGASETGGIGLRRAPGAAFTLLPFLSRSADDGISDGPAPLPLQDRLRWTGPVRFVIEGRLDQALQVGGVNVRLGHVKSVLEAEPGVEALALRLGGDRLKAFVVCAADAEAGLEARLRARAEAGLDAPARPQHYRFGRALPLTREGKARDWD.

Belongs to the ATP-dependent AMP-binding enzyme family.

The enzyme catalyses (E)-4-coumarate + ATP + CoA = (E)-4-coumaroyl-CoA + AMP + diphosphate. Its function is as follows. Converts p-coumaric acid into p-coumaryl CoA. This is necessary for the activation of the photoactive yellow protein (PYP) chromophore. The polypeptide is 4-coumarate--CoA ligase (pcl) (Rhodobacter capsulatus (strain ATCC BAA-309 / NBRC 16581 / SB1003)).